Reading from the N-terminus, the 591-residue chain is DEAD-box ATP-dependent RNA helicase 35 (591 aa).

A Q motif motif is present at residues 146–174 (KNFKDMKFPRPVLDTLKEKGIVQPTPIQV). The 185-residue stretch at 177 to 361 (LPVILAGRDM…RSALVKPVTV (185 aa)) folds into the Helicase ATP-binding domain. ATP is bound at residue 190–197 (AFTGSGKT). A DEAD box motif is present at residues 309–312 (DEAD). The region spanning 372 to 532 (DVIQEVEYVK…RIPPVLAELN (161 aa)) is the Helicase C-terminal domain. The CCHC-type zinc finger occupies 548–565 (KGCAYCGGLGHRIRDCPK).

It belongs to the DEAD box helicase family. DDX41 subfamily.

It carries out the reaction ATP + H2O = ADP + phosphate + H(+). The sequence is that of DEAD-box ATP-dependent RNA helicase 35 (RH35) from Arabidopsis thaliana (Mouse-ear cress).